The sequence spans 698 residues: Elongation factor G (698 aa).

The region spanning 8-284 (ANVRNIGIMA…AVVDYLPSPL (277 aa)) is the tr-type G domain. Residues 17–24 (AHIDAGKT), 81–85 (DTPGH), and 135–138 (NKLD) contribute to the GTP site.

It belongs to the TRAFAC class translation factor GTPase superfamily. Classic translation factor GTPase family. EF-G/EF-2 subfamily.

The protein localises to the cytoplasm. In terms of biological role, catalyzes the GTP-dependent ribosomal translocation step during translation elongation. During this step, the ribosome changes from the pre-translocational (PRE) to the post-translocational (POST) state as the newly formed A-site-bound peptidyl-tRNA and P-site-bound deacylated tRNA move to the P and E sites, respectively. Catalyzes the coordinated movement of the two tRNA molecules, the mRNA and conformational changes in the ribosome. This chain is Elongation factor G, found in Salinispora tropica (strain ATCC BAA-916 / DSM 44818 / JCM 13857 / NBRC 105044 / CNB-440).